Reading from the N-terminus, the 309-residue chain is 15-cis-phytoene synthase (309 aa).

The disordered stretch occupies residues 290–309 (LTSRMRAHPPRPAHLWQRPL).

It belongs to the phytoene/squalene synthase family. It depends on ATP as a cofactor. The cofactor is Mn(2+). Mg(2+) serves as cofactor.

It carries out the reaction 2 (2E,6E,10E)-geranylgeranyl diphosphate = 15-cis-phytoene + 2 diphosphate. Its pathway is carotenoid biosynthesis; phytoene biosynthesis. With respect to regulation, inhibited by phosphate ions and squalestatin. Involved in the biosynthesis of carotenoids. Catalyzes the condensation of two molecules of geranylgeranyl diphosphate (GGPP) to give prephytoene diphosphate (PPPP) and the subsequent rearrangement of the cyclopropylcarbinyl intermediate to yield the 15-cis-phytoene isomer. In Pantoea ananas (Erwinia uredovora), this protein is 15-cis-phytoene synthase (crtB).